The following is a 200-amino-acid chain: Putative pseudouridine methyltransferase (200 aa).

2 residues coordinate S-adenosyl-L-methionine: M133 and C187.

Belongs to the methyltransferase superfamily. TrmY family.

It localises to the cytoplasm. This chain is Putative pseudouridine methyltransferase, found in Alcanivorax borkumensis (strain ATCC 700651 / DSM 11573 / NCIMB 13689 / SK2).